The following is a 400-amino-acid chain: Aminomethyltransferase, mitochondrial (400 aa).

Residues E221, R250, and Y397 each contribute to the substrate site.

This sequence belongs to the GcvT family. Component of the glycine decarboxylase complex (GDC), which is composed of four proteins: P, T, L and H.

The protein resides in the mitochondrion. The enzyme catalyses N(6)-[(R)-S(8)-aminomethyldihydrolipoyl]-L-lysyl-[protein] + (6S)-5,6,7,8-tetrahydrofolate = N(6)-[(R)-dihydrolipoyl]-L-lysyl-[protein] + (6R)-5,10-methylene-5,6,7,8-tetrahydrofolate + NH4(+). Functionally, the glycine cleavage system (glycine decarboxylase complex) catalyzes the degradation of glycine. The polypeptide is Aminomethyltransferase, mitochondrial (GCV1) (Saccharomyces cerevisiae (strain ATCC 204508 / S288c) (Baker's yeast)).